The primary structure comprises 129 residues: Cuticle protein 12.5 (129 aa).

10 tandem repeats follow at residues 7-10 (AAPA), 15-18 (AAPA), 23-26 (AAPA), 28-31 (AAPV), 37-40 (AAPA), 67-70 (AAPA), 79-82 (AAPA), 91-94 (AAPA), 103-106 (AAPA), and 117-120 (AAPA).

Component of the cuticle of migratory locust which contains more than 100 different structural proteins. In Locusta migratoria (Migratory locust), this protein is Cuticle protein 12.5.